A 275-amino-acid chain; its full sequence is Mitochondrial outer membrane protein porin (275 aa).

Residue methionine 1 is modified to Blocked amino end (Met).

It belongs to the eukaryotic mitochondrial porin family. Highly divergent.

The protein resides in the mitochondrion outer membrane. Forms a channel of about 1,7 nM through the cell membrane that allows diffusion of small hydrophilic molecules. The channel adopts an open conformation at low or zero membrane potential and a closed conformation at potentials above 20 mv. The open state has a weak anion selectivity whereas the closed state is cation-selective. The sequence is that of Mitochondrial outer membrane protein porin (porA) from Dictyostelium discoideum (Social amoeba).